The following is a 155-amino-acid chain: Interferon gamma (155 aa).

Positions 1–22 (MNATHCILALQLFLMAVSGCYC) are cleaved as a signal peptide. 2 N-linked (GlcNAc...) asparagine glycosylation sites follow: Asn-38 and Asn-90.

It belongs to the type II (or gamma) interferon family. In terms of assembly, homodimer. Interacts with IFNGR1 (via extracellular domain); this interaction promotes IFNGR1 dimerization. In terms of tissue distribution, released primarily from activated T lymphocytes.

It is found in the secreted. In terms of biological role, type II interferon produced by immune cells such as T-cells and NK cells that plays crucial roles in antimicrobial, antiviral, and antitumor responses by activating effector immune cells and enhancing antigen presentation. Primarily signals through the JAK-STAT pathway after interaction with its receptor IFNGR1 to affect gene regulation. Upon IFNG binding, IFNGR1 intracellular domain opens out to allow association of downstream signaling components JAK2, JAK1 and STAT1, leading to STAT1 activation, nuclear translocation and transcription of IFNG-regulated genes. Many of the induced genes are transcription factors such as IRF1 that are able to further drive regulation of a next wave of transcription. Plays a role in class I antigen presentation pathway by inducing a replacement of catalytic proteasome subunits with immunoproteasome subunits. In turn, increases the quantity, quality, and repertoire of peptides for class I MHC loading. Increases the efficiency of peptide generation also by inducing the expression of activator PA28 that associates with the proteasome and alters its proteolytic cleavage preference. Up-regulates as well MHC II complexes on the cell surface by promoting expression of several key molecules such as cathepsins B/CTSB, H/CTSH, and L/CTSL. Participates in the regulation of hematopoietic stem cells during development and under homeostatic conditions by affecting their development, quiescence, and differentiation. In Mus musculus (Mouse), this protein is Interferon gamma (Ifng).